We begin with the raw amino-acid sequence, 154 residues long: UPF0225 protein YpsIP31758_1970 (154 aa).

This sequence belongs to the UPF0225 family.

The chain is UPF0225 protein YpsIP31758_1970 from Yersinia pseudotuberculosis serotype O:1b (strain IP 31758).